Reading from the N-terminus, the 145-residue chain is Cell division protein SepF (145 aa).

The protein belongs to the SepF family. As to quaternary structure, homodimer. Interacts with FtsZ.

The protein resides in the cytoplasm. Its function is as follows. Cell division protein that is part of the divisome complex and is recruited early to the Z-ring. Probably stimulates Z-ring formation, perhaps through the cross-linking of FtsZ protofilaments. Its function overlaps with FtsA. This is Cell division protein SepF from Lactobacillus helveticus (strain DPC 4571).